Reading from the N-terminus, the 397-residue chain is Probable protein phosphatase 2C 74 (397 aa).

The PPM-type phosphatase domain occupies 133 to 391 (GFWVASRRGL…DDVTVMVVDL (259 aa)). Asp170, Gly171, Asp343, and Asp382 together coordinate Mn(2+).

The protein belongs to the PP2C family. Mg(2+) is required as a cofactor. Mn(2+) serves as cofactor.

It carries out the reaction O-phospho-L-seryl-[protein] + H2O = L-seryl-[protein] + phosphate. The enzyme catalyses O-phospho-L-threonyl-[protein] + H2O = L-threonyl-[protein] + phosphate. The chain is Probable protein phosphatase 2C 74 from Oryza sativa subsp. japonica (Rice).